Consider the following 2261-residue polypeptide: Phospholipid-transporting ATPase ABCA1 (2261 aa).

The S-palmitoyl cysteine moiety is linked to residue Cys-3. Asn-14 carries N-linked (GlcNAc...) asparagine glycosylation. A helical membrane pass occupies residues Thr-22 to Val-42. Cys-23 carries S-palmitoyl cysteine lipidation. Over Arg-43–Ser-639 the chain is Extracellular. An annulus domain 1 region spans residues Trp-69–Pro-80. A disulfide bond links Cys-75 and Cys-309. Residues Asn-98, Asn-151, Asn-161, Asn-196, Asn-244, Asn-292, Asn-337, and Asn-349 are each glycosylated (N-linked (GlcNAc...) asparagine). The tract at residues Ser-368–Leu-379 is annulus domain 2. N-linked (GlcNAc...) asparagine glycosylation is found at Asn-400, Asn-478, Asn-489, and Asn-521. The gateway domain stretch occupies residues Glu-564–Ala-594. Transmembrane regions (helical) follow at residues Met-640–Val-660, Phe-683–Ile-703, Ser-716–Ile-736, Leu-745–Val-765, and Ile-777–Phe-797. Asn-820 carries an N-linked (GlcNAc...) asparagine glycan. A helical transmembrane segment spans residues Met-827–Pro-847. An ABC transporter 1 domain is found at Val-899–Val-1131. An ATP-binding site is contributed by Gly-933–Thr-940. A helical membrane pass occupies residues Thr-941–Gly-961. Phosphoserine; by PKA is present on Ser-1042. 2 S-palmitoyl cysteine lipidation sites follow: Cys-1110 and Cys-1111. Asn-1144 and Asn-1294 each carry an N-linked (GlcNAc...) asparagine glycan. Positions Phe-1285 to Gly-1310 are disordered. Residues Glu-1287 to Asp-1299 are compositionally biased toward acidic residues. Residue Ser-1296 is modified to Phosphoserine. A helical transmembrane segment spans residues Ile-1351 to Phe-1371. At Gly-1372–Leu-1656 the chain is on the extracellular side. Residue Asn-1453 is glycosylated (N-linked (GlcNAc...) asparagine). Cys-1463 and Cys-1477 are disulfide-bonded. Asn-1499, Asn-1504, and Asn-1637 each carry an N-linked (GlcNAc...) asparagine glycan. Transmembrane regions (helical) follow at residues Val-1657–Ile-1677, Phe-1703–Cys-1723, Leu-1735–Pro-1755, Val-1768–Leu-1788, Ile-1802–Met-1822, and Asn-1852–Tyr-1872. Residues Leu-1912–Arg-2144 enclose the ABC transporter 2 domain. Gly-1946–Ser-1953 lines the ATP pocket. Asn-2044 carries an N-linked (GlcNAc...) asparagine glycan. Position 2054 is a phosphoserine; by PKA (Ser-2054). Asn-2238 carries N-linked (GlcNAc...) asparagine glycosylation.

It belongs to the ABC transporter superfamily. ABCA family. As to quaternary structure, interacts with MEGF10. May interact with APOE1; functionally associated with APOE1 in the biogenesis of HDLs. Interacts with ABCA8; this interaction potentiates cholesterol efflux. Interacts with ABCA12 and NR1H2; this interaction is required for ABCA1 localization to the cell surface and is necessary for its normal activity and stability. In terms of processing, phosphorylation on Ser-2054 regulates phospholipid efflux. Palmitoylated by ZDHHC8. Palmitoylation is essential for localization to the plasma membrane. Widely expressed in adult tissues. Highest levels are found in pregnant uterus and uterus.

The protein localises to the cell membrane. The protein resides in the endosome. It catalyses the reaction ATP + H2O + phospholipidSide 1 = ADP + phosphate + phospholipidSide 2.. The enzyme catalyses a 1,2-diacyl-sn-glycero-3-phosphocholine(out) + ATP + H2O = a 1,2-diacyl-sn-glycero-3-phosphocholine(in) + ADP + phosphate + H(+). The catalysed reaction is a 1,2-diacyl-sn-glycero-3-phospho-L-serine(out) + ATP + H2O = a 1,2-diacyl-sn-glycero-3-phospho-L-serine(in) + ADP + phosphate + H(+). It carries out the reaction a sphingomyelin(in) + ATP + H2O = a sphingomyelin(out) + ADP + phosphate + H(+). It catalyses the reaction cholesterol(in) + ATP + H2O = cholesterol(out) + ADP + phosphate + H(+). With respect to regulation, ATPase activity is decreased by cholesterol and ceramide. ATPase activity is stimulated by phosphatidylcholine and to a lesser degree by phosphatidylserine and sphingomyelin. Phospholipid translocase activity is highly reduced by berylium fluoride and aluminum flouride and reduced by N-ethylmaleimide. In terms of biological role, catalyzes the translocation of specific phospholipids from the cytoplasmic to the extracellular/lumenal leaflet of membrane coupled to the hydrolysis of ATP. Thereby, participates in phospholipid transfer to apolipoproteins to form nascent high density lipoproteins/HDLs. Transports preferentially phosphatidylcholine over phosphatidylserine. May play a similar role in the efflux of intracellular cholesterol to apolipoproteins and the formation of nascent high density lipoproteins/HDLs. Translocates phospholipids from the outer face of the plasma membrane and forces it through its gateway and annulus into an elongated hydrophobic tunnel in its extracellular domain. The sequence is that of Phospholipid-transporting ATPase ABCA1 from Mus musculus (Mouse).